The chain runs to 435 residues: MSKKLHVVSLGCTKNLVDTEVMLARLPEYEITQIPEEADLIIVNTCGFIGPAKEESLQTVFDLHSRRKKDSTLVMAGCLSERYKEELQKEMPEVDIFTGVGDYAKIDELISQKKSSFSDQVYLIRSEERIITGSNYHAYIKLSEGCNQQCSFCAIPSFKGKLQSRPIEDIVQEIKNLVAKGYKDFTFVSQDSSSYLRDFGIQESLVDLIHAVEEIEGIMSARILYLYPSTTTPKMIDAIANSPVFVNYFEMPIQHISDSLLKKMKRGIGAQKTKELLYAMRAVPESFLRTSLIVGHPGESEEDFHELVEFLEDFEFDRINLFAYSDEEGTKAYEMEEKIPQEVIEERLAILDAIVKKQQMKSLEKDLGKTVECYLDGTSEESELLLSGRKKIWAPEVDGEILINDSEIDNLQIGNLYKVHINERLGDKLVGTVRA.

The 113-residue stretch at 3 to 115 (KKLHVVSLGC…IDELISQKKS (113 aa)) folds into the MTTase N-terminal domain. Residues Cys12, Cys46, Cys78, Cys146, Cys150, and Cys153 each coordinate [4Fe-4S] cluster. Positions 132–361 (TGSNYHAYIK…DAIVKKQQMK (230 aa)) constitute a Radical SAM core domain.

This sequence belongs to the methylthiotransferase family. RimO subfamily. The cofactor is [4Fe-4S] cluster.

The protein resides in the cytoplasm. It catalyses the reaction L-aspartate(89)-[ribosomal protein uS12]-hydrogen + (sulfur carrier)-SH + AH2 + 2 S-adenosyl-L-methionine = 3-methylsulfanyl-L-aspartate(89)-[ribosomal protein uS12]-hydrogen + (sulfur carrier)-H + 5'-deoxyadenosine + L-methionine + A + S-adenosyl-L-homocysteine + 2 H(+). Functionally, catalyzes the methylthiolation of an aspartic acid residue of ribosomal protein uS12. The protein is Ribosomal protein uS12 methylthiotransferase RimO of Nitratiruptor sp. (strain SB155-2).